Reading from the N-terminus, the 289-residue chain is Ribonuclease H2 subunit A (289 aa).

The region spanning 20 to 249 is the RNase H type-2 domain; sequence PFVMGIDEAG…TETAMRGACF (230 aa). The a divalent metal cation site is built by D26, E27, and D134.

Belongs to the RNase HII family. Eukaryotic subfamily. It depends on Mn(2+) as a cofactor. Mg(2+) is required as a cofactor.

The enzyme catalyses Endonucleolytic cleavage to 5'-phosphomonoester.. In terms of biological role, endonuclease that specifically degrades the RNA of RNA-DNA hybrids. Participates in DNA replication. The protein is Ribonuclease H2 subunit A (rnaseh2A) of Dictyostelium discoideum (Social amoeba).